Reading from the N-terminus, the 305-residue chain is Ornithine carbamoyltransferase (305 aa).

Carbamoyl phosphate contacts are provided by residues 54–57, Gln-81, Arg-105, and 132–135; these read STRT and HPCQ. L-ornithine-binding positions include Asn-163, Asp-220, and 224–225; that span reads SM. Residues 260-261 and Arg-288 contribute to the carbamoyl phosphate site; that span reads CL.

The protein belongs to the aspartate/ornithine carbamoyltransferase superfamily. OTCase family.

It localises to the cytoplasm. It catalyses the reaction carbamoyl phosphate + L-ornithine = L-citrulline + phosphate + H(+). The protein operates within amino-acid biosynthesis; L-arginine biosynthesis; L-arginine from L-ornithine and carbamoyl phosphate: step 1/3. Its function is as follows. Reversibly catalyzes the transfer of the carbamoyl group from carbamoyl phosphate (CP) to the N(epsilon) atom of ornithine (ORN) to produce L-citrulline. This Chromohalobacter salexigens (strain ATCC BAA-138 / DSM 3043 / CIP 106854 / NCIMB 13768 / 1H11) protein is Ornithine carbamoyltransferase.